The sequence spans 513 residues: ATP synthase subunit alpha (513 aa).

169 to 176 (GDRQTGKT) lines the ATP pocket.

The protein belongs to the ATPase alpha/beta chains family. In terms of assembly, F-type ATPases have 2 components, CF(1) - the catalytic core - and CF(0) - the membrane proton channel. CF(1) has five subunits: alpha(3), beta(3), gamma(1), delta(1), epsilon(1). CF(0) has three main subunits: a(1), b(2) and c(9-12). The alpha and beta chains form an alternating ring which encloses part of the gamma chain. CF(1) is attached to CF(0) by a central stalk formed by the gamma and epsilon chains, while a peripheral stalk is formed by the delta and b chains.

It localises to the cell inner membrane. The catalysed reaction is ATP + H2O + 4 H(+)(in) = ADP + phosphate + 5 H(+)(out). In terms of biological role, produces ATP from ADP in the presence of a proton gradient across the membrane. The alpha chain is a regulatory subunit. The sequence is that of ATP synthase subunit alpha from Cupriavidus necator (strain ATCC 17699 / DSM 428 / KCTC 22496 / NCIMB 10442 / H16 / Stanier 337) (Ralstonia eutropha).